The chain runs to 201 residues: ATP-dependent Clp protease proteolytic subunit 2 (201 aa).

The active-site Nucleophile is the S98. H123 is a catalytic residue.

This sequence belongs to the peptidase S14 family. As to quaternary structure, fourteen ClpP subunits assemble into 2 heptameric rings which stack back to back to give a disk-like structure with a central cavity, resembling the structure of eukaryotic proteasomes.

Its subcellular location is the cytoplasm. The enzyme catalyses Hydrolysis of proteins to small peptides in the presence of ATP and magnesium. alpha-casein is the usual test substrate. In the absence of ATP, only oligopeptides shorter than five residues are hydrolyzed (such as succinyl-Leu-Tyr-|-NHMec, and Leu-Tyr-Leu-|-Tyr-Trp, in which cleavage of the -Tyr-|-Leu- and -Tyr-|-Trp bonds also occurs).. Functionally, cleaves peptides in various proteins in a process that requires ATP hydrolysis. Has a chymotrypsin-like activity. Plays a major role in the degradation of misfolded proteins. The polypeptide is ATP-dependent Clp protease proteolytic subunit 2 (Rhizobium johnstonii (strain DSM 114642 / LMG 32736 / 3841) (Rhizobium leguminosarum bv. viciae)).